The following is a 138-amino-acid chain: Small ribosomal subunit protein uS11 (138 aa).

Low complexity predominate over residues 1–12 (MPPAKKAAAAPK). The disordered stretch occupies residues 1–27 (MPPAKKAAAAPKKGQKTRRREKKNVPH). The span at 13-22 (KGQKTRRREK) shows a compositional bias: basic residues.

The protein belongs to the universal ribosomal protein uS11 family. As to quaternary structure, part of the 30S ribosomal subunit. Interacts with proteins S7 and S18. Binds to IF-3.

In terms of biological role, located on the platform of the 30S subunit, it bridges several disparate RNA helices of the 16S rRNA. Forms part of the Shine-Dalgarno cleft in the 70S ribosome. This chain is Small ribosomal subunit protein uS11, found in Mycolicibacterium paratuberculosis (strain ATCC BAA-968 / K-10) (Mycobacterium paratuberculosis).